Here is a 209-residue protein sequence, read N- to C-terminus: Ras-like GTP-binding protein RYL2 (209 aa).

Residue 12–19 (GAQGVGKT) participates in GTP binding. The Effector region motif lies at 34 to 42 (QASTIGASF). Residues 60 to 64 (DTAGQ) and 118 to 121 (TKVD) each bind GTP. Residues Cys208 and Cys209 are each lipidated (S-geranylgeranyl cysteine).

This sequence belongs to the small GTPase superfamily. Rab family.

It localises to the cell membrane. Its function is as follows. Protein transport. Probably involved in vesicular traffic. In Yarrowia lipolytica (strain CLIB 122 / E 150) (Yeast), this protein is Ras-like GTP-binding protein RYL2 (RYL2).